We begin with the raw amino-acid sequence, 461 residues long: MSSTHQLVSSMISSSSSTFLAPSNFNLRTRNACLPMAKRVNTCKCVATPQEKIEYKTKVSRNSNMSKLQAGYLFPEIARRRSAHLLKYPDAQVISLGIGDTTEPIPEVITSAMAKKAHELSTIEGYSGYGAEQGAKPLRAAIAKTFYGGLGIGDDDVFVSDGAKCDISRLQVMFGSNVTIAVQDPSYPAYVDSSVIMGQTGQFNTDVQKYGNIEYMRCTPENGFFPDLSTVGRTDIIFFCSPNNPTGAAATREQLTQLVEFAKKNGSIIVYDSAYAMYMSDDNPRSIFEIPGAEEVAMETASFSKYAGFTGVRLGWTVIPKKLLYSDGFPVAKDFNRIICTCFNGASNISQAGALACLTPEGLEAMHKVIGFYKENTNIIIDTFTSLGYDVYGGKNAPYVWVHFPNQSSWDVFAEILEKTHVVTTPGSGFGPGGEGFVRVSAFGHRENILEACRRFKQLYK.

A chloroplast-targeting transit peptide spans Met1–Cys45. Substrate contacts are provided by Tyr72 and Gly99. Residues Tyr129, Ala163–Lys164, Tyr187, Asn244, Tyr275, and Ser302–Ser304 contribute to the pyridoxal 5'-phosphate site. Lys164, Tyr187, and Asn244 together coordinate substrate. At Lys305 the chain carries N6-(pyridoxal phosphate)lysine. The pyridoxal 5'-phosphate site is built by Arg313 and Asn344. Substrate-binding residues include Asn344 and Arg439.

It belongs to the class-I pyridoxal-phosphate-dependent aminotransferase family. LL-diaminopimelate aminotransferase subfamily. In terms of assembly, homodimer. The cofactor is pyridoxal 5'-phosphate. As to expression, highly expressed in seedlings, roots, stems, flowers and leaves. Lower expression in siliques.

Its subcellular location is the plastid. It is found in the chloroplast. It catalyses the reaction (2S,6S)-2,6-diaminopimelate + 2-oxoglutarate = (S)-2,3,4,5-tetrahydrodipicolinate + L-glutamate + H2O + H(+). Its pathway is amino-acid biosynthesis; L-lysine biosynthesis via DAP pathway; LL-2,6-diaminopimelate from (S)-tetrahydrodipicolinate (aminotransferase route): step 1/1. Required for lysine biosynthesis. Catalyzes the direct conversion of tetrahydrodipicolinate to LL-diaminopimelate, a reaction that requires three enzymes in E.coli. Not active with meso-diaminopimelate, lysine or ornithine as substrates. This chain is LL-diaminopimelate aminotransferase, chloroplastic (DAP), found in Arabidopsis thaliana (Mouse-ear cress).